The primary structure comprises 1120 residues: ISWI chromatin-remodeling complex ATPase ISW2 (1120 aa).

The segment covering 1–16 (MTTQQEEQRSDTKNSK) has biased composition (basic and acidic residues). 2 disordered regions span residues 1-58 (MTTQ…VEDR) and 129-153 (LSKSHSTVSSSSRHHRKTEKEEDAE). 2 positions are modified to phosphoserine: S17 and S19. Basic and acidic residues predominate over residues 47–58 (LSDKEIYTVEDR). Positions 196 to 361 (ISLHENKLSG…WALLNFLLPD (166 aa)) constitute a Helicase ATP-binding domain. Position 209–216 (209–216 (DEMGLGKT)) interacts with ATP. The short motif at 312–315 (DEAH) is the DEAH box element. Residues 494–645 (ILDKLLKRLK…QLVIQQGTGK (152 aa)) form the Helicase C-terminal domain. 2 disordered regions span residues 764–783 (GGGSKSASKQTPQPKAPRAP) and 828–853 (NEGSDAEEEEGEYKNAANTEGHKGHE). Residue S831 is modified to Phosphoserine. An SANT domain is found at 886–938 (KAFTNWNKRDFMAFINACAKYGRDDMENIKKSIDSKTPEEVEVYAKIFWERLK). Positions 1062–1120 (PDANKKKRSRTSATREDTPLSQNESTRASTVPNLPTTMVTNQKDTNDHVDKRTKIDQEA) are disordered. Phosphothreonine is present on T1079. Polar residues predominate over residues 1080 to 1104 (PLSQNESTRASTVPNLPTTMVTNQK). S1082 is modified (phosphoserine). A compositionally biased stretch (basic and acidic residues) spans 1105 to 1120 (DTNDHVDKRTKIDQEA).

This sequence belongs to the SNF2/RAD54 helicase family. ISWI subfamily. In terms of assembly, component of the ISW2 complex, which at least consists of ISW2, ITC1, DLS1 and DPB4. May form a stable subcomplex with ITC1.

It localises to the nucleus. In terms of biological role, catalytic component of the ISW2 complex, which acts in remodeling the chromatin by catalyzing an ATP-dependent alteration in the structure of nucleosomal DNA. The ISW2 complex is involved in coordinating transcriptional repression and in inheritance of telomeric silencing. It is involved in repression of MAT a-specific genes, INO1, and early meiotic genes during mitotic growth dependent upon transcription factor UME6 and in a parallel pathway to the RPD3-SIN3 histone deacetylase complex. In Saccharomyces cerevisiae (strain ATCC 204508 / S288c) (Baker's yeast), this protein is ISWI chromatin-remodeling complex ATPase ISW2 (ISW2).